The primary structure comprises 117 residues: UPF0295 protein GTNG_0491 (117 aa).

Helical transmembrane passes span 12–32 (IRTFALSLIFVGVIVMYLGLF) and 42–62 (LFMVLGLLFLVASGIVYFWIG).

The protein belongs to the UPF0295 family.

It localises to the cell membrane. The chain is UPF0295 protein GTNG_0491 from Geobacillus thermodenitrificans (strain NG80-2).